Here is a 624-residue protein sequence, read N- to C-terminus: tRNA uridine 5-carboxymethylaminomethyl modification enzyme MnmG (624 aa).

FAD contacts are provided by residues 13–18 (GGGHAG), V125, and S180. Position 273–287 (273–287 (GPRYCPSIEDKIVRF)) interacts with NAD(+). Position 370 (Q370) interacts with FAD.

Belongs to the MnmG family. Homodimer. Heterotetramer of two MnmE and two MnmG subunits. The cofactor is FAD.

It localises to the cytoplasm. Its function is as follows. NAD-binding protein involved in the addition of a carboxymethylaminomethyl (cmnm) group at the wobble position (U34) of certain tRNAs, forming tRNA-cmnm(5)s(2)U34. This Legionella pneumophila subsp. pneumophila (strain Philadelphia 1 / ATCC 33152 / DSM 7513) protein is tRNA uridine 5-carboxymethylaminomethyl modification enzyme MnmG.